A 413-amino-acid polypeptide reads, in one-letter code: Multidrug resistance protein MdtA (413 aa).

Positions 1 to 20 (MKGSNTFRWAIAIGVVVAAA) are cleaved as a signal peptide. Disordered stretches follow at residues 31-57 (SPTA…RDGP) and 391-413 (EPQT…GARA). The segment covering 32–49 (PTAAPGVAAQAQHTAAAG) has biased composition (low complexity). Residues 397–413 (ADEKSPSRHEGQKGARA) show a composition bias toward basic and acidic residues.

The protein belongs to the membrane fusion protein (MFP) (TC 8.A.1) family. As to quaternary structure, part of a tripartite efflux system composed of MdtA, MdtB and MdtC.

Its subcellular location is the cell inner membrane. This Salmonella typhi protein is Multidrug resistance protein MdtA.